Consider the following 272-residue polypeptide: F-actin-capping protein subunit beta (272 aa).

Serine 2 carries the post-translational modification N-acetylserine. Serine 2 is modified (phosphoserine). Lysine 235 carries the post-translational modification N6-acetyllysine. Position 263 is a phosphoserine (valine 263).

This sequence belongs to the F-actin-capping protein beta subunit family. In terms of assembly, component of the F-actin capping complex, composed of a heterodimer of an alpha and a beta subunit. Subunit of dynactin, a multiprotein complex part of a tripartite complex with dynein and a adapter, such as BICDL1, BICD2 or HOOK3. The dynactin complex is built around ACTR1A/ACTB filament and consists of an actin-related filament composed of a shoulder domain, a pointed end and a barbed end. Its length is defined by its flexible shoulder domain. The soulder is composed of 2 DCTN1 subunits, 4 DCTN2 and 2 DCTN3. The 4 DCNT2 (via N-terminus) bind the ACTR1A filament and act as molecular rulers to determine the length. The pointed end is important for binding dynein-dynactin cargo adapters. Consists of 4 subunits: ACTR10, DCNT4, DCTN5 and DCTN6. The barbed end is composed of a CAPZA1:CAPZB heterodimers, which binds ACTR1A/ACTB filament and dynactin and stabilizes dynactin. Interacts with ARHGAP17. Interaction with RCSD1/CAPZIP. Component of the WASH complex, composed of F-actin-capping protein subunit alpha (CAPZA1, CAPZA2 or CAPZA3), F-actin-capping protein subunit beta (CAPZB), WASH (WASHC1, WASH2P, WASH3P, WASH4P, WASH5P or WASH6P), WASHC2 (WASHC2A or WASHC2C), WASHC3, WASHC4 and WASHC5. Interacts with ACTG1. Directly interacts with CRACD; this interaction decreases binding to actin.

The protein resides in the cytoplasm. It is found in the cytoskeleton. The protein localises to the myofibril. Its subcellular location is the sarcomere. Functionally, F-actin-capping proteins bind in a Ca(2+)-independent manner to the fast growing ends of actin filaments (barbed end) thereby blocking the exchange of subunits at these ends. Unlike other capping proteins (such as gelsolin and severin), these proteins do not sever actin filaments. Plays a role in the regulation of cell morphology and cytoskeletal organization. Forms, with CAPZB, the barbed end of the fast growing ends of actin filaments in the dynactin complex and stabilizes dynactin structure. The dynactin multiprotein complex activates the molecular motor dynein for ultra-processive transport along microtubules. This Homo sapiens (Human) protein is F-actin-capping protein subunit beta.